We begin with the raw amino-acid sequence, 250 residues long: tRNA (guanine-N(1)-)-methyltransferase (250 aa).

S-adenosyl-L-methionine contacts are provided by residues glycine 116 and 136-141 (IGDYVL).

The protein belongs to the RNA methyltransferase TrmD family. In terms of assembly, homodimer.

Its subcellular location is the cytoplasm. The catalysed reaction is guanosine(37) in tRNA + S-adenosyl-L-methionine = N(1)-methylguanosine(37) in tRNA + S-adenosyl-L-homocysteine + H(+). In terms of biological role, specifically methylates guanosine-37 in various tRNAs. The sequence is that of tRNA (guanine-N(1)-)-methyltransferase from Pseudomonas putida (strain GB-1).